Reading from the N-terminus, the 433-residue chain is Serine carboxypeptidase-like 11 (433 aa).

The signal sequence occupies residues 1–21 (MELTLKLLVLLLFILNHHVGS). Disulfide bonds link Cys-80–Cys-322, Cys-243–Cys-257, and Cys-281–Cys-288. Residue Asn-101 is glycosylated (N-linked (GlcNAc...) asparagine). Ser-176 is a catalytic residue. Asn-342 carries an N-linked (GlcNAc...) asparagine glycan. Residue Asp-358 is part of the active site. A glycan (N-linked (GlcNAc...) asparagine) is linked at Asn-374. His-411 is an active-site residue.

It belongs to the peptidase S10 family. In terms of tissue distribution, ubiquitous.

The protein localises to the secreted. Functionally, probable carboxypeptidase. This is Serine carboxypeptidase-like 11 (SCPL11) from Arabidopsis thaliana (Mouse-ear cress).